A 714-amino-acid polypeptide reads, in one-letter code: Polyribonucleotide nucleotidyltransferase (714 aa).

Residues Asp-489 and Asp-495 each contribute to the Mg(2+) site. One can recognise a KH domain in the interval 556-615 (PKIDTIKIDVDKIKVVIGKGGETIDKIIAETGVKIDIDEEGNVSIYSSDQDAINRAKEII). Residues 625-693 (GEVYHAKVVR…DKGRIDASMK (69 aa)) enclose the S1 motif domain. Residues 691-714 (SMKALVPRPPKPEKSEAKKEGKHD) form a disordered region. A compositionally biased stretch (basic and acidic residues) spans 700–714 (PKPEKSEAKKEGKHD).

Belongs to the polyribonucleotide nucleotidyltransferase family. It depends on Mg(2+) as a cofactor.

Its subcellular location is the cytoplasm. It catalyses the reaction RNA(n+1) + phosphate = RNA(n) + a ribonucleoside 5'-diphosphate. Its function is as follows. Involved in mRNA degradation. Catalyzes the phosphorolysis of single-stranded polyribonucleotides processively in the 3'- to 5'-direction. In Streptococcus equi subsp. zooepidemicus (strain MGCS10565), this protein is Polyribonucleotide nucleotidyltransferase.